The chain runs to 38 residues: Toxin Bot33 (38 aa).

3 disulfide bridges follow: C8/C28, C14/C33, and C18/C35.

Belongs to the short scorpion toxin superfamily. Potassium channel inhibitor family. Expressed by the venom gland.

It is found in the secreted. Its function is as follows. A probable toxin that has no activity on the tested mammalian voltage-gated potassium channels (when tested at 1 uM) and is not toxic to mice. It resembles alpha toxins that block voltage-gated potassium channels. The chain is Toxin Bot33 from Buthus occitanus tunetanus (Common European scorpion).